The chain runs to 623 residues: Chaperone protein HtpG (623 aa).

Residues 1-328 (MTQEKKKFDA…SEDLPLNISR (328 aa)) are a; substrate-binding. A b region spans residues 329-544 (ESLQHNSILD…ESAMDIRMER (216 aa)). The interval 545–623 (FLIEQKQIAN…DIVQKAILSL (79 aa)) is c.

Belongs to the heat shock protein 90 family. In terms of assembly, homodimer.

It is found in the cytoplasm. Functionally, molecular chaperone. Has ATPase activity. This chain is Chaperone protein HtpG, found in Rickettsia canadensis (strain McKiel).